Here is a 150-residue protein sequence, read N- to C-terminus: FAD synthase (150 aa).

ATP is bound by residues 8 to 9 (AF), 13 to 16 (HPGH), Asp95, and His122.

This sequence belongs to the archaeal FAD synthase family. As to quaternary structure, homodimer. It depends on a divalent metal cation as a cofactor.

The catalysed reaction is FMN + ATP + H(+) = FAD + diphosphate. Its pathway is cofactor biosynthesis; FAD biosynthesis; FAD from FMN: step 1/1. Its function is as follows. Catalyzes the transfer of the AMP portion of ATP to flavin mononucleotide (FMN) to produce flavin adenine dinucleotide (FAD) coenzyme. This Methanobrevibacter ruminantium (strain ATCC 35063 / DSM 1093 / JCM 13430 / OCM 146 / M1) (Methanobacterium ruminantium) protein is FAD synthase.